The following is a 477-amino-acid chain: Cytochrome P450 monooxygenase poxC (477 aa).

Residues 24–41 (AWHFAVLSFVYVIARSIY) traverse the membrane as a helical segment. Cys-420 contacts heme.

Belongs to the cytochrome P450 family. The cofactor is heme.

The protein localises to the membrane. Its pathway is secondary metabolite biosynthesis. Its function is as follows. Cytochrome P450 monooxygenase; part of the gene cluster that mediates the biosynthesis of oxaleimides, cytotoxic compounds containing an unusual disubstituted succinimide moiety. The first step of the pathway is provided by the HR-PKS poxF that serves in a new mode of collaborative biosynthesis with the PKS-NRPS poxE, by providing the olefin containing amino acid substrate via the synthesis of an ACP-bound dec-4-enoate. The cytochrome P450 monooxygenase poxM-catalyzed oxidation at the alpha-position creates the enzyme-bound 2-hydroxydec-4-enoyl-ACP thioester, which may be prone to spontaneous hydrolysis to yield 2-hydroxydec-4-enoic acid due to increased electrophilicity of the carbonyl. 2-hydroxydec-4-enoic acid can then be further oxidized by poxM to yield the alpha-ketoacid 2-oxodec-4-enoicacid, which is reductively aminated by the aminotransferase poxL to yield (S,E)-2-aminodec-4-enoic acid. The Hybrid PKS-NRPS synthetase poxE then performs condensation between the octaketide product of its PKS modules and the amino group of (S,E)-2-aminodec-4-enoic acid which is activated and incorporated by the adenylation domain. The resulting aminoacyl product can be cyclized by the Diels-Alderase PoxQ and reductively released by the reductive (R) domain of poxE to yield an aldehyde intermediate. The released aldehyde is then substrate for a Knoevenagel condensation by the hydrolyase poxO followed by an oxidation at the 5-position of the pyrrolidone ring. The presence of the olefin from the amino acid building block allows for migration of the substituted allyl group to occur. This allylic transposition reaction takes place in a conjugate addition, semipinacol-like fashion to yield a succinimide intermediate. Iterative two-electron oxidations of the C7 methyl of the succinimide intermediate to the carboxylic acid can be catalyzed by one of two remaining cytochrome P450 monooxygenasess poxC or poxD to yield oxaleimide A. Subsequent oxidation yields the maleimide scaffold oxaleimide I. Both oxaleimide A and oxaleimide I can undergo oxidative modifications in the decalin ring to yield the series of products oxaleimides B to H. The polypeptide is Cytochrome P450 monooxygenase poxC (Penicillium oxalicum (strain 114-2 / CGMCC 5302) (Penicillium decumbens)).